The chain runs to 112 residues: Elongin-C (112 aa).

Belongs to the SKP1 family. Heterotrimer of an A (ELOA, ELOA2 or ELOA3P), ELOB and ELOC subunit. The elongin BC complex interacts with EPOP; leading to recruit the elongin BC complex to Polycomb group (PcG) target genes, thereby restricting excessive activity of the PRC2/EED-EZH2 complex. Component of multiple cullin-RING E3 ubiquitin-protein ligase complexes composed of Elongin BC (ELOB and ELOC), a cullin (CUL2 or CUL5), a catalytic subunit (RBX1 or RNF7/RBX2), as well as a substrate adapter protein that can be either ASB2, ASB9, ASB11, KLHDC2, KLHDC3, KLHDC10, APPBP2, FEM1A, FEM1B, FEM1C, LRR1, PCMTD1, SOCS1, SOCS2, SOCS5, SPSB1, SPSB3, ELOA, VHL, WSB1, ZYG11B or RAB40C. Interacts with TMF1. As part of the Elongin BC E3 ubiquitin ligase complex; interacts with NRBP1. May form oligomers as a KLHDC2/KLHDC3-ELOB-ELOC complex; this interaction is autoinhibitory for the E3 ligase complex as the substrate-binding site of KLHDC2/KLHDC3 is blocked in the oligomer. Post-translationally, ubiquitinated by the DCX(AMBRA1) complex, leading to its degradation by the proteasome.

Its subcellular location is the nucleus. It functions in the pathway protein modification; protein ubiquitination. Its function is as follows. SIII, also known as elongin, is a general transcription elongation factor that increases the RNA polymerase II transcription elongation past template-encoded arresting sites. Subunit A is transcriptionally active and its transcription activity is strongly enhanced by binding to the dimeric complex of the SIII regulatory subunits B and C (elongin BC complex). In embryonic stem cells, the elongin BC complex is recruited by EPOP to Polycomb group (PcG) target genes in order generate genomic region that display both active and repressive chromatin properties, an important feature of pluripotent stem cells. Core component of multiple cullin-RING-based ECS (ElonginB/C-CUL2/5-SOCS-box protein) E3 ubiquitin-protein ligase complexes, which mediate the ubiquitination of target proteins. By binding to BC-box motifs it seems to link target recruitment subunits, like VHL and members of the SOCS box family, to Cullin/RBX1 modules that activate E2 ubiquitination enzymes. Component the von Hippel-Lindau ubiquitination complex CBC(VHL). A number of ECS complexes (containing either KLHDC2, KLHDC3, KLHDC10, APPBP2, FEM1A, FEM1B or FEM1C as substrate-recognition component) are part of the DesCEND (destruction via C-end degrons) pathway, which recognizes a C-degron located at the extreme C terminus of target proteins, leading to their ubiquitination and degradation. The ECS(ASB9) complex mediates ubiquitination and degradation of CKB. As part of a multisubunit ubiquitin ligase complex, polyubiquitinates monoubiquitinated POLR2A. ECS(LRR1) ubiquitinates MCM7 and promotes CMG replisome disassembly by VCP and chromatin extraction during S-phase. As part of the ECS(RAB40C) complex, mediates ANKRD28 ubiquitination and degradation, thereby inhibiting protein phosphatase 6 (PP6) complex activity and focal adhesion assembly during cell migration. The polypeptide is Elongin-C (ELOC) (Bos taurus (Bovine)).